We begin with the raw amino-acid sequence, 272 residues long: MKRSAFFISDGTGITAETLGQSLLAQFENITFSKFTRPYIDSVEKARAMVQQINKAAETDGFRPIIFDTIVNQDIREILATSNGFMIDIFSTFLAPLEQELTEHSSYTVGKSHSIGHNSNYMERIEAVNFALDNDDGARTHYYDKADLILVGVSRCGKTPTCLYMAMQFGIRAANYPLTEDDMERLQLPAALRAHQHKLFGLTIDPDRLTAIRNERKPNSRYSSYAQCEFEVREVENLFRRENIPHINSTHFSVEEISAKILVEKGVERRFK.

152–159 (GVSRCGKT) serves as a coordination point for ADP.

This sequence belongs to the pyruvate, phosphate/water dikinase regulatory protein family. PSRP subfamily.

The catalysed reaction is [pyruvate, water dikinase] + ADP = [pyruvate, water dikinase]-phosphate + AMP + H(+). It catalyses the reaction [pyruvate, water dikinase]-phosphate + phosphate + H(+) = [pyruvate, water dikinase] + diphosphate. Bifunctional serine/threonine kinase and phosphorylase involved in the regulation of the phosphoenolpyruvate synthase (PEPS) by catalyzing its phosphorylation/dephosphorylation. The chain is Putative phosphoenolpyruvate synthase regulatory protein from Pseudomonas fluorescens (strain Pf0-1).